The sequence spans 377 residues: Alanine racemase (377 aa).

Residue lysine 37 is the Proton acceptor; specific for D-alanine of the active site. An N6-(pyridoxal phosphate)lysine modification is found at lysine 37. Arginine 135 lines the substrate pocket. The active-site Proton acceptor; specific for L-alanine is the tyrosine 271. Methionine 319 serves as a coordination point for substrate.

The protein belongs to the alanine racemase family. Pyridoxal 5'-phosphate is required as a cofactor.

The enzyme catalyses L-alanine = D-alanine. It functions in the pathway amino-acid biosynthesis; D-alanine biosynthesis; D-alanine from L-alanine: step 1/1. Functionally, catalyzes the interconversion of L-alanine and D-alanine. May also act on other amino acids. The polypeptide is Alanine racemase (alr) (Helicobacter acinonychis (strain Sheeba)).